Consider the following 355-residue polypeptide: Adenine deaminase (355 aa).

Zn(2+) contacts are provided by H23, H25, and H211. E214 (proton donor) is an active-site residue. A Zn(2+)-binding site is contributed by D292. D293 is a binding site for substrate.

This sequence belongs to the metallo-dependent hydrolases superfamily. Adenosine and AMP deaminases family. Adenine deaminase type 2 subfamily. The cofactor is Zn(2+).

It is found in the cytoplasm. Its subcellular location is the nucleus. The enzyme catalyses adenine + H2O + H(+) = hypoxanthine + NH4(+). Functionally, catalyzes the hydrolytic deamination of adenine to hypoxanthine. Plays an important role in the purine salvage pathway and in nitrogen catabolism. In Kluyveromyces lactis (strain ATCC 8585 / CBS 2359 / DSM 70799 / NBRC 1267 / NRRL Y-1140 / WM37) (Yeast), this protein is Adenine deaminase.